Consider the following 302-residue polypeptide: uncharacterized protein (302 aa).

The active site involves E47.

This sequence belongs to the PhzF family.

This is an uncharacterized protein from Mesorhizobium japonicum (strain LMG 29417 / CECT 9101 / MAFF 303099) (Mesorhizobium loti (strain MAFF 303099)).